The chain runs to 272 residues: Cell division protein FtsQ (272 aa).

Over methionine 1–serine 20 the chain is Cytoplasmic. A helical transmembrane segment spans residues arginine 21–methionine 40. The Periplasmic portion of the chain corresponds to glutamine 41 to aspartate 272. In terms of domain architecture, POTRA spans tryptophan 45–glutamine 114.

It belongs to the FtsQ/DivIB family. FtsQ subfamily. In terms of assembly, part of a complex composed of FtsB, FtsL and FtsQ.

The protein localises to the cell inner membrane. Essential cell division protein. May link together the upstream cell division proteins, which are predominantly cytoplasmic, with the downstream cell division proteins, which are predominantly periplasmic. May control correct divisome assembly. This chain is Cell division protein FtsQ, found in Thiomonas arsenitoxydans (strain DSM 22701 / CIP 110005 / 3As).